A 130-amino-acid polypeptide reads, in one-letter code: Small ribosomal subunit protein uS11 (130 aa).

Belongs to the universal ribosomal protein uS11 family. As to quaternary structure, part of the 30S ribosomal subunit. Interacts with proteins S7 and S18. Binds to IF-3.

In terms of biological role, located on the platform of the 30S subunit, it bridges several disparate RNA helices of the 16S rRNA. Forms part of the Shine-Dalgarno cleft in the 70S ribosome. In Moorella thermoacetica (strain ATCC 39073 / JCM 9320), this protein is Small ribosomal subunit protein uS11.